The primary structure comprises 203 residues: Histidine biosynthesis bifunctional protein HisIE (203 aa).

The interval 1 to 114 (MLTEQQRREL…FGDASHQWLF (114 aa)) is phosphoribosyl-AMP cyclohydrolase. Residues 115–203 (LYQLEQLLAE…VIDNLRKRHQ (89 aa)) are phosphoribosyl-ATP pyrophosphohydrolase.

This sequence in the N-terminal section; belongs to the PRA-CH family. It in the C-terminal section; belongs to the PRA-PH family.

The protein localises to the cytoplasm. The enzyme catalyses 1-(5-phospho-beta-D-ribosyl)-ATP + H2O = 1-(5-phospho-beta-D-ribosyl)-5'-AMP + diphosphate + H(+). It carries out the reaction 1-(5-phospho-beta-D-ribosyl)-5'-AMP + H2O = 1-(5-phospho-beta-D-ribosyl)-5-[(5-phospho-beta-D-ribosylamino)methylideneamino]imidazole-4-carboxamide. It participates in amino-acid biosynthesis; L-histidine biosynthesis; L-histidine from 5-phospho-alpha-D-ribose 1-diphosphate: step 2/9. Its pathway is amino-acid biosynthesis; L-histidine biosynthesis; L-histidine from 5-phospho-alpha-D-ribose 1-diphosphate: step 3/9. This chain is Histidine biosynthesis bifunctional protein HisIE (hisI), found in Salmonella typhimurium (strain LT2 / SGSC1412 / ATCC 700720).